The primary structure comprises 503 residues: ATP synthase subunit alpha (503 aa).

169–176 serves as a coordination point for ATP; the sequence is GDRSTGKT.

This sequence belongs to the ATPase alpha/beta chains family. As to quaternary structure, F-type ATPases have 2 components, CF(1) - the catalytic core - and CF(0) - the membrane proton channel. CF(1) has five subunits: alpha(3), beta(3), gamma(1), delta(1), epsilon(1). CF(0) has three main subunits: a(1), b(2) and c(9-12). The alpha and beta chains form an alternating ring which encloses part of the gamma chain. CF(1) is attached to CF(0) by a central stalk formed by the gamma and epsilon chains, while a peripheral stalk is formed by the delta and b chains.

Its subcellular location is the cell membrane. It catalyses the reaction ATP + H2O + 4 H(+)(in) = ADP + phosphate + 5 H(+)(out). Its function is as follows. Produces ATP from ADP in the presence of a proton gradient across the membrane. The alpha chain is a regulatory subunit. The sequence is that of ATP synthase subunit alpha from Dehalococcoides mccartyi (strain ATCC BAA-2100 / JCM 16839 / KCTC 5957 / BAV1).